The sequence spans 92 residues: Probable Fe(2+)-trafficking protein (92 aa).

This sequence belongs to the Fe(2+)-trafficking protein family.

Could be a mediator in iron transactions between iron acquisition and iron-requiring processes, such as synthesis and/or repair of Fe-S clusters in biosynthetic enzymes. The sequence is that of Probable Fe(2+)-trafficking protein from Shewanella pealeana (strain ATCC 700345 / ANG-SQ1).